A 497-amino-acid chain; its full sequence is Methionine--tRNA ligase (497 aa).

The 'HIGH' region motif lies at 14-24; the sequence is YYVNDVPHLGH. The Zn(2+) site is built by Cys-129, Cys-132, Cys-147, and His-150. Residues 295–299 carry the 'KMSKS' region motif; the sequence is KMSKT. Lys-298 is a binding site for ATP.

Belongs to the class-I aminoacyl-tRNA synthetase family. MetG type 2A subfamily. Monomer. The cofactor is Zn(2+).

The protein localises to the cytoplasm. The enzyme catalyses tRNA(Met) + L-methionine + ATP = L-methionyl-tRNA(Met) + AMP + diphosphate. In terms of biological role, is required not only for elongation of protein synthesis but also for the initiation of all mRNA translation through initiator tRNA(fMet) aminoacylation. The chain is Methionine--tRNA ligase (metG) from Aquifex aeolicus (strain VF5).